The primary structure comprises 453 residues: uncharacterized protein (453 aa).

Residues 1 to 110 (MIQTQSTAIK…KAILRTFNHP (110 aa)) are Cytoplasmic-facing. A helical transmembrane segment spans residues 111 to 131 (IALTELQFLVSAVLCVGFASI). The Lumenal segment spans residues 132 to 172 (VNLFRLPRLKHTKFSKALNSFPDGILPEYLDGNFRSSILHK). The helical transmembrane segment at 173–193 (FLVPSKLVLMTTFPMGIFQFI) threads the bilayer. The Cytoplasmic segment spans residues 194-201 (GHITSHKA). Residues 202-222 (VSMIPVSLVHSVKALSPIITV) form a helical membrane-spanning segment. The Lumenal segment spans residues 223–234 (GYYKFFEHRYYN). A helical membrane pass occupies residues 235-255 (SMTYYTLLLLIFGVMTTCWST). The Cytoplasmic segment spans residues 256 to 269 (HGSKRASDNKSGSS). A helical membrane pass occupies residues 270–290 (LIGLLFAFISMIIFVAQNIFA). The Lumenal segment spans residues 291-332 (KNILTIRRKVGILPSSSTDDVTSKEGQPSLDKTRFSPLQVDK). The helical transmembrane segment at 333–353 (ITILFYCSCIGFSLTLLPFLT) threads the bilayer. Topologically, residues 354–371 (GELMHGGSVINDLTLETV) are cytoplasmic. The helical transmembrane segment at 372–392 (ALVAIHGIAHFFQAMLAFQLI) threads the bilayer. The Lumenal segment spans residues 393 to 413 (GLLSSINYSVANIMKRIVVIS). Residues 414-434 (VALFWETKLNFFQVFGVILTI) traverse the membrane as a helical segment. Over 435 to 453 (AGLYGYDKWGLSKKDGRQA) the chain is Cytoplasmic.

This sequence belongs to the TPT transporter family.

The protein localises to the membrane. In terms of biological role, able to suppress the functional loss of YPT1. May form a channel. Protein SLY41 is not essential for cell viability. The SLY41 gene is a multicopy suppressor. This is an uncharacterized protein from Saccharomyces cerevisiae (strain ATCC 204508 / S288c) (Baker's yeast).